The primary structure comprises 777 residues: Aminopeptidase P (777 aa).

An N-terminal signal peptide occupies residues 1–17 (MQLNFLLFVFIFLMVFH). Residue His-551 participates in substrate binding. Positions 570 and 581 each coordinate Mn(2+). A substrate-binding site is contributed by His-640. His-644 contacts Mn(2+). His-653 contributes to the substrate binding site. Positions 676 and 690 each coordinate Mn(2+).

It belongs to the peptidase M24B family. Homodimer. Requires Mn(2+) as cofactor. The N-terminus may be proteolytically cleaved to generate a 73-kDa mature form.

Its subcellular location is the vacuole lumen. It localises to the cytoplasm. The catalysed reaction is Release of any N-terminal amino acid, including proline, that is linked to proline, even from a dipeptide or tripeptide.. Partially activated by Co(2+) and Mg(2+) has no effect. Inhibited by 1 mM Zn(2+), Ni(2+), or Cu(2+). Inhibited by apstatin, a non-hydrolysable peptide analog. Functionally, catalyzes the removal of a penultimate prolyl residue from the N-termini of peptides. In the food vacuole, involved in the final step of host hemoglobin catabolism, by cleaving hemoglobin-derived oligopeptides. In the cytoplasm, may be involved in the last steps of the turnover of ubiquitinated proteins. The sequence is that of Aminopeptidase P from Plasmodium falciparum (isolate 3D7).